We begin with the raw amino-acid sequence, 108 residues long: Large ribosomal subunit protein eL30 (108 aa).

It belongs to the eukaryotic ribosomal protein eL30 family.

This is Large ribosomal subunit protein eL30 (rpl30e) from Saccharolobus solfataricus (strain ATCC 35092 / DSM 1617 / JCM 11322 / P2) (Sulfolobus solfataricus).